The sequence spans 204 residues: MNFLNFSILIFAYLLGSINSAIIVCYIFRLPSPRSVGSGNPGMTNVLRIGGKVPAAITLIFDILKGLVPVVIAKVLTGNEFITACTALYAILGHIFPIFFGFKGGKGVATLIGTLFGFSWILGLIFVITWLCVAIITRYSSLSALVATVIASFSVIFTSDLQVAAPFLIIAIIILVKHKGNIQRLISRQESKIGDKAKAKNDSN.

The next 5 helical transmembrane spans lie at 8–28, 53–73, 81–101, 116–136, and 155–175; these read ILIF…CYIF, VPAA…VVIA, FITA…IFFG, FGFS…VAII, and VIFT…IIIL.

It belongs to the PlsY family. As to quaternary structure, probably interacts with PlsX.

It is found in the cell inner membrane. It carries out the reaction an acyl phosphate + sn-glycerol 3-phosphate = a 1-acyl-sn-glycero-3-phosphate + phosphate. It functions in the pathway lipid metabolism; phospholipid metabolism. Its function is as follows. Catalyzes the transfer of an acyl group from acyl-phosphate (acyl-PO(4)) to glycerol-3-phosphate (G3P) to form lysophosphatidic acid (LPA). This enzyme utilizes acyl-phosphate as fatty acyl donor, but not acyl-CoA or acyl-ACP. This Francisella tularensis subsp. tularensis (strain FSC 198) protein is Glycerol-3-phosphate acyltransferase.